Here is a 315-residue protein sequence, read N- to C-terminus: Putative olfactory receptor 2I1 (315 aa).

Residues 1 to 24 (MKANYSAEERFLLLGFSDWPSLQP) are Extracellular-facing. Residues 25–48 (VLFALVLLCYLLTLTGNSALVLLA) form a helical membrane-spanning segment. Residues 49–56 (VRDPRLHT) are Cytoplasmic-facing. The helical transmembrane segment at 57-78 (PMYYFLCHLALVDAGFTTSVVP) threads the bilayer. At 79-99 (PLLANLRGPALWLPRSHCTAQ) the chain is on the extracellular side. Residues Cys96 and Cys188 are joined by a disulfide bond. The helical transmembrane segment at 100 to 119 (LCASLALGSAECVLLAVMAL) threads the bilayer. At 120 to 138 (DRAAAVCRPLRYAGLVSPR) the chain is on the cytoplasmic side. A helical membrane pass occupies residues 139–157 (LCRTLASASWLSGLTNSVA). Residues 158-195 (QTALLAERPLCAPRLLDHFICELPALLKLACGGDGDTT) are Extracellular-facing. The helical transmembrane segment at 196 to 219 (ENQMFAARVVILLLPFAVILASYG) threads the bilayer. At 220–236 (AVARAVCCMRFSGGRRR) the chain is on the cytoplasmic side. A helical transmembrane segment spans residues 237 to 259 (AVGTCGSHLTAVCLFYGSAIYTY). Residues 260-272 (LQPAQRYNQARGK) are Extracellular-facing. A helical membrane pass occupies residues 273 to 292 (FVSLFYTVVTPALNPLIYTL). At 293-315 (RNKKVKGAARRLLRSLGRGQAGQ) the chain is on the cytoplasmic side.

The protein belongs to the G-protein coupled receptor 1 family.

Its subcellular location is the cell membrane. In terms of biological role, odorant receptor. The protein is Putative olfactory receptor 2I1 of Homo sapiens (Human).